A 94-amino-acid chain; its full sequence is Co-chaperonin GroES (94 aa).

The protein belongs to the GroES chaperonin family. Heptamer of 7 subunits arranged in a ring. Interacts with the chaperonin GroEL.

The protein localises to the cytoplasm. Together with the chaperonin GroEL, plays an essential role in assisting protein folding. The GroEL-GroES system forms a nano-cage that allows encapsulation of the non-native substrate proteins and provides a physical environment optimized to promote and accelerate protein folding. GroES binds to the apical surface of the GroEL ring, thereby capping the opening of the GroEL channel. This is Co-chaperonin GroES from Brevibacillus choshinensis.